The following is an 871-amino-acid chain: Alanine--tRNA ligase (871 aa).

Residues histidine 559, histidine 563, cysteine 661, and histidine 665 each contribute to the Zn(2+) site.

It belongs to the class-II aminoacyl-tRNA synthetase family. Zn(2+) serves as cofactor.

Its subcellular location is the cytoplasm. It catalyses the reaction tRNA(Ala) + L-alanine + ATP = L-alanyl-tRNA(Ala) + AMP + diphosphate. Its function is as follows. Catalyzes the attachment of alanine to tRNA(Ala) in a two-step reaction: alanine is first activated by ATP to form Ala-AMP and then transferred to the acceptor end of tRNA(Ala). Also edits incorrectly charged Ser-tRNA(Ala) and Gly-tRNA(Ala) via its editing domain. This Aquifex pyrophilus protein is Alanine--tRNA ligase.